The sequence spans 207 residues: UPF0319 protein VV2327 (207 aa).

The N-terminal stretch at 1–18 (MLRVLGLAGMLMSFNIHA) is a signal peptide.

The protein belongs to the UPF0319 family.

The protein is UPF0319 protein VV2327 of Vibrio vulnificus (strain YJ016).